The following is a 389-amino-acid chain: NADH-quinone oxidoreductase subunit D (389 aa).

This sequence belongs to the complex I 49 kDa subunit family. In terms of assembly, NDH-1 is composed of 14 different subunits. Subunits NuoB, C, D, E, F, and G constitute the peripheral sector of the complex.

It localises to the cell inner membrane. It catalyses the reaction a quinone + NADH + 5 H(+)(in) = a quinol + NAD(+) + 4 H(+)(out). NDH-1 shuttles electrons from NADH, via FMN and iron-sulfur (Fe-S) centers, to quinones in the respiratory chain. The immediate electron acceptor for the enzyme in this species is believed to be ubiquinone. Couples the redox reaction to proton translocation (for every two electrons transferred, four hydrogen ions are translocated across the cytoplasmic membrane), and thus conserves the redox energy in a proton gradient. The chain is NADH-quinone oxidoreductase subunit D from Rickettsia prowazekii (strain Madrid E).